The chain runs to 351 residues: D-alanine--D-alanine ligase (351 aa).

Residues 135-344 enclose the ATP-grasp domain; the sequence is KMAFAQAGLP…FAELVDQLIQ (210 aa). 171-226 serves as a coordination point for ATP; that stretch reads EQRLGYPCFVKPANLGSSVGIAKVRSRSELEKALDSAASYDRRIVIETGVKAREVE. Mg(2+) contacts are provided by aspartate 297, glutamate 311, and asparagine 313.

The protein belongs to the D-alanine--D-alanine ligase family. Mg(2+) is required as a cofactor. It depends on Mn(2+) as a cofactor.

It localises to the cytoplasm. It carries out the reaction 2 D-alanine + ATP = D-alanyl-D-alanine + ADP + phosphate + H(+). It functions in the pathway cell wall biogenesis; peptidoglycan biosynthesis. Its function is as follows. Cell wall formation. In Rippkaea orientalis (strain PCC 8801 / RF-1) (Cyanothece sp. (strain PCC 8801)), this protein is D-alanine--D-alanine ligase.